Here is an 864-residue protein sequence, read N- to C-terminus: MATNGHFASIGVDNDKTAYEHGVQVIDENKEFNPNISKYLSLENVTHAGFNYHLISVFGSQSTGKSTLLNHLFGTHFSVMSDSERRQTTKGIWMSKNKREGEATVDPTLRMADNILVMDVEGTDGRERGEDQDFERKSALFALATSEVLIVNIWEHQVGLYQGANMGLLKTVFEVNLQLFLKDKNTTHRSLLFFVIRDFVGTTPLKNLQKTLMEDMARLWESISKPPGLESSSVHDYFDFQFYGLPHKSYQPEQFVAETKKLSLRFREGQRDPSMDARRGEFSEGGVFLPEYHRRIPADGFSRYAEGIWDQIVNNKDLDLPTQQELLAQFRCDEILREVMIAFDEAIVPFEEKQSQSARLGEPEVLGGLGAAMRSSRAKAVKNFETEASRYHKGVYQRKRAELESKVDTRLKALLQGQLNAAHKSGINEFSEAVSSSVKSGQKQGAGYDFAEIVNEEVKKAIAKFEDVARSTVVEGTTWSDYKQELALYEKELADVSGRLRREEMRRLANRVERWVQSRLGESVGLEFNALGSGRAGGGAPETGEKPLEKAFWDRVWNVFVETVLDAERRFTDRASSFDASLEEVDVGLWRLRRKSWGVLRAKIDEEMTEGNLLLKLRENFEDKFRYDDAGVPRIWRPTDDIEGIYTRARESTLTLIPLLSRFRLAETSAPPPLDRWIGHTPSSATPADEEDLPPIGGVDEEEGKSLDEEMMILSEAKRQELTVRFKKAADGVYVEAKRSAIGGMTQVPLYFYGLLLALGWNEIIAVLRNPAYFFLLFICAVGAYVTYQLNLWGPIIKMTEAASSQALVEGKKRLREFLESSDTGRQAIAMSAGSGRSGEQYELSDLSKKGKARTSADEDMDDL.

Residues 1–747 lie on the Cytoplasmic side of the membrane; sequence MATNGHFASI…KRSAIGGMTQ (747 aa). The region spanning 49–305 is the GB1/RHD3-type G domain; it reads GFNYHLISVF…IPADGFSRYA (257 aa). A GTP-binding site is contributed by 59-66; that stretch reads GSQSTGKS. The stretch at 480–506 forms a coiled coil; sequence SDYKQELALYEKELADVSGRLRREEMR. The interval 675–701 is disordered; that stretch reads DRWIGHTPSSATPADEEDLPPIGGVDE. Positions 688-701 are enriched in acidic residues; it reads ADEEDLPPIGGVDE. Residues 748 to 768 traverse the membrane as a helical segment; that stretch reads VPLYFYGLLLALGWNEIIAVL. The Lumenal portion of the chain corresponds to 769 to 771; the sequence is RNP. Residues 772–792 traverse the membrane as a helical segment; the sequence is AYFFLLFICAVGAYVTYQLNL. The Cytoplasmic segment spans residues 793 to 864; sequence WGPIIKMTEA…TSADEDMDDL (72 aa). A disordered region spans residues 830 to 864; the sequence is AMSAGSGRSGEQYELSDLSKKGKARTSADEDMDDL.

This sequence belongs to the TRAFAC class dynamin-like GTPase superfamily. GB1/RHD3 GTPase family. RHD3 subfamily.

The protein localises to the endoplasmic reticulum membrane. Functionally, cooperates with the reticulon proteins and tubule-shaping DP1 family proteins to generate and maintain the structure of the tubular endoplasmic reticulum network. Has GTPase activity, which is required for its function in ER organization. This Aspergillus fumigatus (strain CBS 144.89 / FGSC A1163 / CEA10) (Neosartorya fumigata) protein is Protein sey1 (sey1).